The chain runs to 537 residues: MAAKLIAFDEEARSKLLTGVLKLSKAVKATLGPKGRYVVLERKFGSPLITNDGVTIAKEIDLEDPYENLGAQLAKEVASKTNDVAGDGTTTATVLAEAMVREGMKNVTAGANPIALRRGIEKAVEAVTEEIKKLSRPVSGKRDITEVATISAKDQQIGSIIAEAMEKVGKDGVVTVEEGKSLGMELEFVEGMQFDRGYVSPYFVTDPERMETVLEDPLIVITDKKISNVQEFLPLLEKIVQYGRSFLLIADDVEGEALATLVVNKLRGTFNCVAVKAPGFGDRRKEMLQDIAIVTGGQVISEELGVSFESVTPDMFGHARSVKVDKESTTIVGGKGSSEEIEKRIAQIRKQLETTESEYEKEKLQERLAKLAGGVAVIKVGAATETEMKEKKHRVEDAVSATKAAMEEGIVAGGGVTLVKASTVLDKLPLENDELIGATIVKKALMEPARVIAENAGFAGEVVVEELKKREYPVGFDAVKGEYVDMFEAGIIDPTKVTRSALQNAASIAAMVLTTEALVVEKPEQEKAQPGMPPEEY.

Residues 30–33 (TLGP), 87–91 (DGTTT), Gly414, 477–479 (DAV), and Asp493 each bind ATP.

The protein belongs to the chaperonin (HSP60) family. In terms of assembly, forms a cylinder of 14 subunits composed of two heptameric rings stacked back-to-back. Interacts with the co-chaperonin GroES.

Its subcellular location is the cytoplasm. The enzyme catalyses ATP + H2O + a folded polypeptide = ADP + phosphate + an unfolded polypeptide.. Functionally, together with its co-chaperonin GroES, plays an essential role in assisting protein folding. The GroEL-GroES system forms a nano-cage that allows encapsulation of the non-native substrate proteins and provides a physical environment optimized to promote and accelerate protein folding. In Coprothermobacter proteolyticus (strain ATCC 35245 / DSM 5265 / OCM 4 / BT), this protein is Chaperonin GroEL.